A 185-amino-acid polypeptide reads, in one-letter code: Large ribosomal subunit protein uL22 (185 aa).

The tract at residues 158–185 (AKPREDEPHKKKISKKKLARAKEKMLRE) is disordered. The segment covering 167-176 (KKKISKKKLA) has biased composition (basic residues).

Belongs to the universal ribosomal protein uL22 family.

The polypeptide is Large ribosomal subunit protein uL22 (RpL17) (Diaphorina citri (Asian citrus psyllid)).